Here is a 1169-residue protein sequence, read N- to C-terminus: RecBCD enzyme subunit RecB (1169 aa).

The UvrD-like helicase ATP-binding domain occupies 1–436 (MNKILEKIQN…IVLKINHRSS (436 aa)). Residues 1 to 839 (MNKILEKIQN…LLEIAKIFTI (839 aa)) are DNA-binding and helicase activity, interacts with RecC. 18-25 (ASAGTGKT) contacts ATP. Positions 459–746 (IEKIDFTNSL…ELMTIHKSKG (288 aa)) constitute a UvrD-like helicase C-terminal domain. The segment at 883–1169 (KEYTSSFSSL…ILELGIKRHL (287 aa)) is nuclease activity, interacts with RecD and RecA. Mg(2+) is bound by residues histidine 939, aspartate 1052, and aspartate 1065. The active-site For nuclease activity is aspartate 1065.

The protein belongs to the helicase family. UvrD subfamily. In terms of assembly, heterotrimer of RecB, RecC and RecD. All subunits contribute to DNA-binding. Interacts with RecA. It depends on Mg(2+) as a cofactor.

The catalysed reaction is Exonucleolytic cleavage (in the presence of ATP) in either 5'- to 3'- or 3'- to 5'-direction to yield 5'-phosphooligonucleotides.. It catalyses the reaction Couples ATP hydrolysis with the unwinding of duplex DNA by translocating in the 3'-5' direction.. It carries out the reaction ATP + H2O = ADP + phosphate + H(+). A helicase/nuclease that prepares dsDNA breaks (DSB) for recombinational DNA repair. Binds to DSBs and unwinds DNA via a highly rapid and processive ATP-dependent bidirectional helicase activity. Unwinds dsDNA until it encounters a Chi (crossover hotspot instigator) sequence from the 3' direction. Cuts ssDNA a few nucleotides 3' to the Chi site. The properties and activities of the enzyme are changed at Chi. The Chi-altered holoenzyme produces a long 3'-ssDNA overhang and facilitates RecA-binding to the ssDNA for homologous DNA recombination and repair. Holoenzyme degrades any linearized DNA that is unable to undergo homologous recombination. In the holoenzyme this subunit contributes ATPase, 3'-5' helicase, exonuclease activity and loads RecA onto ssDNA. The polypeptide is RecBCD enzyme subunit RecB (Borreliella burgdorferi (strain ATCC 35210 / DSM 4680 / CIP 102532 / B31) (Borrelia burgdorferi)).